We begin with the raw amino-acid sequence, 217 residues long: Large ribosomal subunit protein uL3 (217 aa).

Belongs to the universal ribosomal protein uL3 family. Part of the 50S ribosomal subunit. Forms a cluster with proteins L14 and L19.

Functionally, one of the primary rRNA binding proteins, it binds directly near the 3'-end of the 23S rRNA, where it nucleates assembly of the 50S subunit. The polypeptide is Large ribosomal subunit protein uL3 (Brachyspira hyodysenteriae (strain ATCC 49526 / WA1)).